The sequence spans 560 residues: Oxygen-dependent choline dehydrogenase (560 aa).

FAD is bound at residue 6–35; sequence DYIIVGAGSAGCVLADRLSESGDHSVLLLE. Catalysis depends on His470, which acts as the Proton acceptor.

This sequence belongs to the GMC oxidoreductase family. Requires FAD as cofactor.

The enzyme catalyses choline + A = betaine aldehyde + AH2. It carries out the reaction betaine aldehyde + NAD(+) + H2O = glycine betaine + NADH + 2 H(+). Its pathway is amine and polyamine biosynthesis; betaine biosynthesis via choline pathway; betaine aldehyde from choline (cytochrome c reductase route): step 1/1. In terms of biological role, involved in the biosynthesis of the osmoprotectant glycine betaine. Catalyzes the oxidation of choline to betaine aldehyde and betaine aldehyde to glycine betaine at the same rate. The polypeptide is Oxygen-dependent choline dehydrogenase (Vibrio vulnificus (strain YJ016)).